The chain runs to 237 residues: tRNA (guanine-N(7)-)-methyltransferase (237 aa).

S-adenosyl-L-methionine is bound by residues Glu68, Glu93, Asp120, and Asp143. Asp143 is an active-site residue. Residues Lys147, Asp179, and 216–219 contribute to the substrate site; that span reads TKFE.

This sequence belongs to the class I-like SAM-binding methyltransferase superfamily. TrmB family.

It carries out the reaction guanosine(46) in tRNA + S-adenosyl-L-methionine = N(7)-methylguanosine(46) in tRNA + S-adenosyl-L-homocysteine. Its pathway is tRNA modification; N(7)-methylguanine-tRNA biosynthesis. Its function is as follows. Catalyzes the formation of N(7)-methylguanine at position 46 (m7G46) in tRNA. This is tRNA (guanine-N(7)-)-methyltransferase from Shewanella halifaxensis (strain HAW-EB4).